The following is a 180-amino-acid chain: Acireductone dioxygenase (180 aa).

Residues His-97, His-99, Glu-103, and His-141 each contribute to the Fe(2+) site. His-97, His-99, Glu-103, and His-141 together coordinate Ni(2+).

Belongs to the acireductone dioxygenase (ARD) family. In terms of assembly, monomer. The cofactor is Fe(2+). Mg(2+) is required as a cofactor. Ni(2+) serves as cofactor. Requires Mn(2+) as cofactor. It depends on Co(2+) as a cofactor.

It catalyses the reaction 1,2-dihydroxy-5-(methylsulfanyl)pent-1-en-3-one + O2 = 3-(methylsulfanyl)propanoate + CO + formate + 2 H(+). The enzyme catalyses 1,2-dihydroxy-5-(methylsulfanyl)pent-1-en-3-one + O2 = 4-methylsulfanyl-2-oxobutanoate + formate + 2 H(+). It functions in the pathway amino-acid biosynthesis; L-methionine biosynthesis via salvage pathway; L-methionine from S-methyl-5-thio-alpha-D-ribose 1-phosphate: step 5/6. In terms of biological role, catalyzes 2 different reactions between oxygen and the acireductone 1,2-dihydroxy-3-keto-5-methylthiopentene (DHK-MTPene) depending upon the metal bound in the active site. Fe-containing acireductone dioxygenase (Fe-ARD) produces formate and 2-keto-4-methylthiobutyrate (KMTB), the alpha-ketoacid precursor of methionine in the methionine recycle pathway. Ni-containing acireductone dioxygenase (Ni-ARD) produces methylthiopropionate, carbon monoxide and formate, and does not lie on the methionine recycle pathway. The polypeptide is Acireductone dioxygenase (mtnD) (Klebsiella oxytoca).